Here is a 334-residue protein sequence, read N- to C-terminus: Putative binding protein YtlA (334 aa).

A signal peptide spans 1 to 23 (MNRWLRLGFACVGSIFLMFALAA). The N-palmitoyl cysteine moiety is linked to residue C24. The S-diacylglycerol cysteine moiety is linked to residue C24.

The protein belongs to the bacterial solute-binding protein SsuA/TauA family.

Its subcellular location is the cell membrane. This Bacillus subtilis (strain 168) protein is Putative binding protein YtlA (ytlA).